The following is a 20-amino-acid chain: D-alpha-glycerophosphatase (20 aa).

As to quaternary structure, monomer. It depends on Mg(2+) as a cofactor. Mn(2+) serves as cofactor.

Its subcellular location is the cytoplasm. The protein operates within polyol metabolism; glycerol biosynthesis. This chain is D-alpha-glycerophosphatase, found in Bacillus licheniformis.